Reading from the N-terminus, the 115-residue chain is Transmembrane protein 218 (115 aa).

3 helical membrane passes run 5-25 (VLGV…VLLL), 38-58 (FSIV…LLFP), and 81-101 (YVLL…LLTH).

This sequence belongs to the TMEM218 family. In terms of assembly, interacts with TMEM67.

Its subcellular location is the membrane. It localises to the cell projection. The protein resides in the cilium. Its function is as follows. May be involved in ciliary biogenesis or function. This chain is Transmembrane protein 218 (Tmem218), found in Mus musculus (Mouse).